A 366-amino-acid chain; its full sequence is Chorismate synthase (366 aa).

Residues Arg48 and Arg54 each coordinate NADP(+). FMN contacts are provided by residues 125 to 127 (RSS), 238 to 239 (NA), Gly278, 293 to 297 (KPTSS), and Arg319.

Belongs to the chorismate synthase family. In terms of assembly, homotetramer. The cofactor is FMNH2.

It catalyses the reaction 5-O-(1-carboxyvinyl)-3-phosphoshikimate = chorismate + phosphate. It participates in metabolic intermediate biosynthesis; chorismate biosynthesis; chorismate from D-erythrose 4-phosphate and phosphoenolpyruvate: step 7/7. In terms of biological role, catalyzes the anti-1,4-elimination of the C-3 phosphate and the C-6 proR hydrogen from 5-enolpyruvylshikimate-3-phosphate (EPSP) to yield chorismate, which is the branch point compound that serves as the starting substrate for the three terminal pathways of aromatic amino acid biosynthesis. This reaction introduces a second double bond into the aromatic ring system. The chain is Chorismate synthase from Burkholderia ambifaria (strain MC40-6).